Here is a 527-residue protein sequence, read N- to C-terminus: Sensory neuron membrane protein 1 (527 aa).

Over Met-1–Gly-10 the chain is Cytoplasmic. Residues Leu-11–Ile-31 form a helical membrane-spanning segment. The Extracellular portion of the chain corresponds to Leu-32–Arg-456. N-linked (GlcNAc...) asparagine glycans are attached at residues Asn-67 and Asn-229. 3 cysteine pairs are disulfide-bonded: Cys-268-Cys-333, Cys-297-Cys-352, and Cys-335-Cys-341. Residue Asn-440 is glycosylated (N-linked (GlcNAc...) asparagine). The chain crosses the membrane as a helical span at residues Ile-457–Leu-477. The Cytoplasmic segment spans residues Val-478 to Met-527.

The protein belongs to the CD36 family. As to expression, principal component of the olfactory cilia membrane. Localizes to the antennal tissue with two to three fold higher expression in males compared to females.

The protein localises to the cell membrane. Functionally, plays an olfactory role that is not restricted to pheromone sensitivity. This is Sensory neuron membrane protein 1 from Ostrinia nubilalis (European corn borer).